The chain runs to 185 residues: MSSFTIPSPSSFSLSNSYNQTSPHSFTLRNSRSNFEFHRLRLDVESRRRSTSLRSNCSTKGTDSGENENKSVLDAFFLGKALAEVINERIESTVGEVLSTIGKFQAEQQKQVQEIQEEVLERAKKAKERAARETMEEQGLVASKPVAITRNPDAVVVASVTSTSTVESKTIMVDVEESSSSSDED.

The transit peptide at methionine 1–asparagine 56 directs the protein to the chloroplast. Positions arginine 48 to asparagine 67 are disordered. A compositionally biased stretch (polar residues) spans serine 52 to serine 64. Residues glutamine 105 to glutamine 138 are a coiled coil.

It is found in the plastid. It localises to the chloroplast. The protein localises to the plastoglobule. This is an uncharacterized protein from Arabidopsis thaliana (Mouse-ear cress).